A 262-amino-acid polypeptide reads, in one-letter code: MLIFDSGVGGLSILKNIKKILPNIHYIYMLDNESFPYGNKTEFFIIQRSIKIIHTIKKIYPINVVVIACNTISTVALSILRKKFDIPIFGIFPHIKAAEKITKNKIIGLIATKATINSSYTQKIIYEYSCSNTIKIIGTNKLAVIAEKKIRGVAVSQKKLKNIFRPWINLPTCPDTIILGCTHFSLLEKEIKNILYKTRSVYFIDSIKKVIFQIESYLKTSNVNQKIKKNIFLYSKNNNNLKKLLSFLKQYKFTVIKHINLN.

Residues 5 to 6 (DS) and 37 to 38 (YG) contribute to the substrate site. Cys69 (proton donor/acceptor) is an active-site residue. 70–71 (NT) provides a ligand contact to substrate. The active-site Proton donor/acceptor is the Cys181. Position 182–183 (182–183 (TH)) interacts with substrate.

The protein belongs to the aspartate/glutamate racemases family.

It catalyses the reaction L-glutamate = D-glutamate. It functions in the pathway cell wall biogenesis; peptidoglycan biosynthesis. Functionally, provides the (R)-glutamate required for cell wall biosynthesis. The chain is Glutamate racemase from Buchnera aphidicola subsp. Acyrthosiphon pisum (strain APS) (Acyrthosiphon pisum symbiotic bacterium).